The following is a 279-amino-acid chain: Probable phosphatase phospho1 (279 aa).

Asp41 (nucleophile) is an active-site residue. Asp41 and Asp43 together coordinate Mg(2+). Asp43 (proton donor) is an active-site residue. Residues Asp52 and Asp133 each coordinate substrate. Position 215 (Asp215) interacts with Mg(2+).

Belongs to the HAD-like hydrolase superfamily. PHOSPHO family. It depends on Mg(2+) as a cofactor.

It localises to the extracellular vesicle. It catalyses the reaction phosphoethanolamine + H2O = ethanolamine + phosphate. The enzyme catalyses phosphocholine + H2O = choline + phosphate. In terms of biological role, phosphatase that has a high activity toward phosphoethanolamine (PEA) and phosphocholine (PCho). Involved in the generation of inorganic phosphate for bone mineralization. The sequence is that of Probable phosphatase phospho1 (phospho1) from Danio rerio (Zebrafish).